The sequence spans 309 residues: UDP-N-acetylenolpyruvoylglucosamine reductase (309 aa).

Positions 34–198 (RVGGPAEVMF…VRARLHARPG (165 aa)) constitute an FAD-binding PCMH-type domain. Arg-178 is an active-site residue. Ser-227 functions as the Proton donor in the catalytic mechanism. Residue Glu-297 is part of the active site.

The protein belongs to the MurB family. The cofactor is FAD.

Its subcellular location is the cytoplasm. The enzyme catalyses UDP-N-acetyl-alpha-D-muramate + NADP(+) = UDP-N-acetyl-3-O-(1-carboxyvinyl)-alpha-D-glucosamine + NADPH + H(+). It functions in the pathway cell wall biogenesis; peptidoglycan biosynthesis. In terms of biological role, cell wall formation. The protein is UDP-N-acetylenolpyruvoylglucosamine reductase of Acidiphilium cryptum (strain JF-5).